Reading from the N-terminus, the 319-residue chain is Beta-ketoacyl-[acyl-carrier-protein] synthase III (319 aa).

Active-site residues include cysteine 110 and histidine 246. The interval glutamine 247–arginine 251 is ACP-binding. Residue asparagine 276 is part of the active site.

It belongs to the thiolase-like superfamily. FabH family. In terms of assembly, homodimer.

It localises to the cytoplasm. It carries out the reaction malonyl-[ACP] + acetyl-CoA + H(+) = 3-oxobutanoyl-[ACP] + CO2 + CoA. Its pathway is lipid metabolism; fatty acid biosynthesis. Catalyzes the condensation reaction of fatty acid synthesis by the addition to an acyl acceptor of two carbons from malonyl-ACP. Catalyzes the first condensation reaction which initiates fatty acid synthesis and may therefore play a role in governing the total rate of fatty acid production. Possesses both acetoacetyl-ACP synthase and acetyl transacylase activities. Its substrate specificity determines the biosynthesis of branched-chain and/or straight-chain of fatty acids. In Lactobacillus delbrueckii subsp. bulgaricus (strain ATCC 11842 / DSM 20081 / BCRC 10696 / JCM 1002 / NBRC 13953 / NCIMB 11778 / NCTC 12712 / WDCM 00102 / Lb 14), this protein is Beta-ketoacyl-[acyl-carrier-protein] synthase III.